A 77-amino-acid chain; its full sequence is Acyl carrier protein (77 aa).

The Carrier domain occupies 2–77 (SSIDKRIKEI…DAIDYITDHT (76 aa)). At Ser37 the chain carries O-(pantetheine 4'-phosphoryl)serine.

This sequence belongs to the acyl carrier protein (ACP) family. In terms of processing, 4'-phosphopantetheine is transferred from CoA to a specific serine of apo-ACP by AcpS. This modification is essential for activity because fatty acids are bound in thioester linkage to the sulfhydryl of the prosthetic group.

Its subcellular location is the cytoplasm. The protein operates within lipid metabolism; fatty acid biosynthesis. Its function is as follows. Carrier of the growing fatty acid chain in fatty acid biosynthesis. The chain is Acyl carrier protein from Geotalea uraniireducens (strain Rf4) (Geobacter uraniireducens).